The sequence spans 287 residues: Uricase (287 aa).

Residues K11 and T58 each act as charge relay system in the active site. The urate site is built by T58, D59, F160, R177, V219, Q220, and N246. H248 acts as the Charge relay system in catalysis. The Microbody targeting signal signature appears at 285 to 287 (SRL).

It belongs to the uricase family.

The protein resides in the peroxisome. It catalyses the reaction urate + O2 + H2O = 5-hydroxyisourate + H2O2. The protein operates within purine metabolism; urate degradation; (S)-allantoin from urate: step 1/3. Catalyzes the oxidation of uric acid to 5-hydroxyisourate, which is further processed to form (S)-allantoin. The chain is Uricase (uox) from Dictyostelium discoideum (Social amoeba).